Consider the following 302-residue polypeptide: MLVRDRAELRAALVALDRAASSHPPAAAQDAGPARAASRHDRPVRAVVMTMGALHEGHASLLRAARARADQVVATIFVNPLQFGAGEDLDRYPRTLAADLAVCAREGVDVVFAPAVIHDPPPLVRFGAGPLGAVLEGASRPGHFDGMLTLVGTMLHLVQPDLAFFGRKDAQQLVCIRRMVADLAFDVTVIGVETAREPDGLARSSRNVYLTAEQRTEALALSRALAAGAAASADGAPAVLAAARAVLDAADGVDVDYLELAGPEDLGPVRGGPALLLVAARVGTTRLIDNVSLILPTDTQGA.

51 to 58 (MGALHEGH) contacts ATP. The active-site Proton donor is the His-58. Gln-82 serves as a coordination point for (R)-pantoate. Gln-82 provides a ligand contact to beta-alanine. 166-169 (GRKD) contributes to the ATP binding site. Gln-172 serves as a coordination point for (R)-pantoate. ATP-binding positions include Ala-195 and 203-206 (RSSR).

This sequence belongs to the pantothenate synthetase family. Homodimer.

The protein resides in the cytoplasm. It catalyses the reaction (R)-pantoate + beta-alanine + ATP = (R)-pantothenate + AMP + diphosphate + H(+). Its pathway is cofactor biosynthesis; (R)-pantothenate biosynthesis; (R)-pantothenate from (R)-pantoate and beta-alanine: step 1/1. In terms of biological role, catalyzes the condensation of pantoate with beta-alanine in an ATP-dependent reaction via a pantoyl-adenylate intermediate. In Frankia alni (strain DSM 45986 / CECT 9034 / ACN14a), this protein is Pantothenate synthetase 4.